The chain runs to 94 residues: MFTINAEVRKEQGKGASRRLRAANKFPAIIYGGKEAPLAIELDHDKVINMQAKAEFYSEVLTIVVDGKEIKVKAQDVQRHPYKPKLQHIDFVRA.

Belongs to the bacterial ribosomal protein bL25 family. As to quaternary structure, part of the 50S ribosomal subunit; part of the 5S rRNA/L5/L18/L25 subcomplex. Contacts the 5S rRNA. Binds to the 5S rRNA independently of L5 and L18.

In terms of biological role, this is one of the proteins that binds to the 5S RNA in the ribosome where it forms part of the central protuberance. The protein is Large ribosomal subunit protein bL25 of Shigella boydii serotype 18 (strain CDC 3083-94 / BS512).